A 319-amino-acid polypeptide reads, in one-letter code: 4-hydroxy-3-methylbut-2-enyl diphosphate reductase (319 aa).

Position 18 (Cys18) interacts with [4Fe-4S] cluster. (2E)-4-hydroxy-3-methylbut-2-enyl diphosphate-binding residues include His47 and His81. Residues His47 and His81 each coordinate dimethylallyl diphosphate. Isopentenyl diphosphate-binding residues include His47 and His81. Cys103 serves as a coordination point for [4Fe-4S] cluster. Position 131 (His131) interacts with (2E)-4-hydroxy-3-methylbut-2-enyl diphosphate. A dimethylallyl diphosphate-binding site is contributed by His131. Residue His131 coordinates isopentenyl diphosphate. Glu133 serves as the catalytic Proton donor. Thr172 contacts (2E)-4-hydroxy-3-methylbut-2-enyl diphosphate. Cys202 is a [4Fe-4S] cluster binding site. Ser230, Ser231, Asn232, and Ser275 together coordinate (2E)-4-hydroxy-3-methylbut-2-enyl diphosphate. Dimethylallyl diphosphate is bound by residues Ser230, Ser231, Asn232, and Ser275. 4 residues coordinate isopentenyl diphosphate: Ser230, Ser231, Asn232, and Ser275.

Belongs to the IspH family. The cofactor is [4Fe-4S] cluster.

The enzyme catalyses isopentenyl diphosphate + 2 oxidized [2Fe-2S]-[ferredoxin] + H2O = (2E)-4-hydroxy-3-methylbut-2-enyl diphosphate + 2 reduced [2Fe-2S]-[ferredoxin] + 2 H(+). It carries out the reaction dimethylallyl diphosphate + 2 oxidized [2Fe-2S]-[ferredoxin] + H2O = (2E)-4-hydroxy-3-methylbut-2-enyl diphosphate + 2 reduced [2Fe-2S]-[ferredoxin] + 2 H(+). It functions in the pathway isoprenoid biosynthesis; dimethylallyl diphosphate biosynthesis; dimethylallyl diphosphate from (2E)-4-hydroxy-3-methylbutenyl diphosphate: step 1/1. It participates in isoprenoid biosynthesis; isopentenyl diphosphate biosynthesis via DXP pathway; isopentenyl diphosphate from 1-deoxy-D-xylulose 5-phosphate: step 6/6. Its function is as follows. Catalyzes the conversion of 1-hydroxy-2-methyl-2-(E)-butenyl 4-diphosphate (HMBPP) into a mixture of isopentenyl diphosphate (IPP) and dimethylallyl diphosphate (DMAPP). Acts in the terminal step of the DOXP/MEP pathway for isoprenoid precursor biosynthesis. This is 4-hydroxy-3-methylbut-2-enyl diphosphate reductase from Methylocella silvestris (strain DSM 15510 / CIP 108128 / LMG 27833 / NCIMB 13906 / BL2).